Reading from the N-terminus, the 506-residue chain is F-box protein At4g02760 (506 aa).

The region spanning 115-161 (TSWPLLPELTIKVFSMLDTKSLMQASACCTMFNKCAMDRVCYSHIDL) is the F-box domain. The interval 452-506 (TFVAEFRSPSPSESDVRSPSPSSSSDSSSSSDSSSSSSSGESSDESGTEEEEDED) is disordered. Low complexity predominate over residues 459-492 (SPSPSESDVRSPSPSSSSDSSSSSDSSSSSSSGE). Positions 493–506 (SSDESGTEEEEDED) are enriched in acidic residues.

The protein is F-box protein At4g02760 of Arabidopsis thaliana (Mouse-ear cress).